A 226-amino-acid chain; its full sequence is Apoptosis regulator OPG045 (226 aa).

An essential and sufficient to inhibit host NLRP1 region spans residues 32-37; that stretch reads NVDHDY.

It belongs to the orthopoxvirus OPG045 family. Homodimer. Interacts with host pro-apoptotic protein BCL2L11 (via BH3 domain). Interacts with host NLRP1. Interacts with host BAK.

It is found in the host mitochondrion outer membrane. It localises to the host cytoplasm. Its function is as follows. Plays a role in evading host innate immune response by inhibiting host inflammasome activation. Interacts with and inhibits NLR-mediated interleukin-1 beta/IL1B production in infected cells. At the host mitochondria outer membrane, interacts with the BH3 domain of host BAK and prevents BAK from binding active BAX. In turn, host apoptosis is inhibited. The sequence is that of Apoptosis regulator OPG045 (OPG045) from Vaccinia virus (strain Western Reserve) (VACV).